Reading from the N-terminus, the 152-residue chain is Endoribonuclease YbeY (152 aa).

His-114, His-118, and His-124 together coordinate Zn(2+).

Belongs to the endoribonuclease YbeY family. It depends on Zn(2+) as a cofactor.

It is found in the cytoplasm. Its function is as follows. Single strand-specific metallo-endoribonuclease involved in late-stage 70S ribosome quality control and in maturation of the 3' terminus of the 16S rRNA. In Coxiella burnetii (strain CbuK_Q154) (Coxiella burnetii (strain Q154)), this protein is Endoribonuclease YbeY.